A 319-amino-acid polypeptide reads, in one-letter code: tRNA-modifying protein YgfZ (319 aa).

W27 and W189 together coordinate folate.

It belongs to the tRNA-modifying YgfZ family.

The protein resides in the cytoplasm. Folate-binding protein involved in regulating the level of ATP-DnaA and in the modification of some tRNAs. It is probably a key factor in regulatory networks that act via tRNA modification, such as initiation of chromosomal replication. This Buchnera aphidicola subsp. Schizaphis graminum (strain Sg) protein is tRNA-modifying protein YgfZ.